We begin with the raw amino-acid sequence, 162 residues long: NADH-quinone oxidoreductase subunit E (162 aa).

Positions 88, 93, 129, and 133 each coordinate [2Fe-2S] cluster.

This sequence belongs to the complex I 24 kDa subunit family. As to quaternary structure, composed of 13 different subunits. Subunits NuoCD, E, F, and G constitute the peripheral sector of the complex. Requires [2Fe-2S] cluster as cofactor.

The enzyme catalyses a quinone + NADH + 5 H(+)(in) = a quinol + NAD(+) + 4 H(+)(out). Its function is as follows. NDH-1 shuttles electrons from NADH, via FMN and iron-sulfur (Fe-S) centers, to quinones in the respiratory chain. Couples the redox reaction to proton translocation (for every two electrons transferred, four hydrogen ions are translocated across the cytoplasmic membrane), and thus conserves the redox energy in a proton gradient. The sequence is that of NADH-quinone oxidoreductase subunit E (nuoE) from Buchnera aphidicola subsp. Acyrthosiphon pisum (strain APS) (Acyrthosiphon pisum symbiotic bacterium).